A 54-amino-acid chain; its full sequence is SPbeta prophage-derived uncharacterized protein YoqE (54 aa).

This is SPbeta prophage-derived uncharacterized protein YoqE (yoqE) from Bacillus subtilis (strain 168).